Consider the following 555-residue polypeptide: Exodeoxyribonuclease 7 large subunit (555 aa).

This sequence belongs to the XseA family. As to quaternary structure, heterooligomer composed of large and small subunits.

It localises to the cytoplasm. The catalysed reaction is Exonucleolytic cleavage in either 5'- to 3'- or 3'- to 5'-direction to yield nucleoside 5'-phosphates.. In terms of biological role, bidirectionally degrades single-stranded DNA into large acid-insoluble oligonucleotides, which are then degraded further into small acid-soluble oligonucleotides. The sequence is that of Exodeoxyribonuclease 7 large subunit from Chlamydia felis (strain Fe/C-56) (Chlamydophila felis).